The chain runs to 105 residues: Putative membrane protein insertion efficiency factor (105 aa).

This sequence belongs to the UPF0161 family.

The protein localises to the cell membrane. Functionally, could be involved in insertion of integral membrane proteins into the membrane. This chain is Putative membrane protein insertion efficiency factor, found in Bifidobacterium longum (strain NCC 2705).